Consider the following 549-residue polypeptide: Efflux pump patC (549 aa).

The segment covering 1 to 12 (MAESTAHTSPSL) has biased composition (polar residues). The segment at 1–40 (MAESTAHTSPSLNDKEREVDQGILSDESGPAEEVKETPDQ) is disordered. The next 14 helical transmembrane spans lie at 50–70 (LLIC…NTIV), 85–105 (AQLG…ILPL), 116–136 (WLFI…GGAP), 146–166 (VWAG…ITIL), 178–198 (LVGL…GAFA), 206–226 (WGFY…VFLL), 252–272 (VLSA…GVMW), 282–302 (LYVV…FCVL), 321–341 (IALY…VYYI), 360–380 (LLPF…LMPK), 385–405 (VLWY…MYTV), 419–439 (ILLG…PSLV), 460–482 (LLGL…NALL), and 526–546 (VYVM…FLPW).

Belongs to the major facilitator superfamily. TCR/Tet family.

The protein localises to the vacuole membrane. Its subcellular location is the cell membrane. Efflux pump; part of the gene cluster that mediates the biosynthesis of patulin, an acetate-derived tetraketide mycotoxin produced by several fungal species that shows antimicrobial properties against several bacteria. May be involved in the secretion of E-ascladiol to be converted to patulin by the secreted patulin synthase patE. The sequence is that of Efflux pump patC from Aspergillus clavatus (strain ATCC 1007 / CBS 513.65 / DSM 816 / NCTC 3887 / NRRL 1 / QM 1276 / 107).